The primary structure comprises 94 residues: Integration host factor subunit beta (94 aa).

Belongs to the bacterial histone-like protein family. Heterodimer of an alpha and a beta chain.

In terms of biological role, this protein is one of the two subunits of integration host factor, a specific DNA-binding protein that functions in genetic recombination as well as in transcriptional and translational control. The protein is Integration host factor subunit beta of Actinobacillus succinogenes (strain ATCC 55618 / DSM 22257 / CCUG 43843 / 130Z).